The primary structure comprises 433 residues: Enolase (433 aa).

Q163 contributes to the (2R)-2-phosphoglycerate binding site. The active-site Proton donor is E205. Mg(2+) contacts are provided by D241, E289, and D316. Residues K341, R370, S371, and K392 each coordinate (2R)-2-phosphoglycerate. K341 acts as the Proton acceptor in catalysis.

It belongs to the enolase family. Mg(2+) is required as a cofactor.

Its subcellular location is the cytoplasm. The protein resides in the secreted. It localises to the cell surface. It carries out the reaction (2R)-2-phosphoglycerate = phosphoenolpyruvate + H2O. It functions in the pathway carbohydrate degradation; glycolysis; pyruvate from D-glyceraldehyde 3-phosphate: step 4/5. Its function is as follows. Catalyzes the reversible conversion of 2-phosphoglycerate (2-PG) into phosphoenolpyruvate (PEP). It is essential for the degradation of carbohydrates via glycolysis. This Treponema denticola (strain ATCC 35405 / DSM 14222 / CIP 103919 / JCM 8153 / KCTC 15104) protein is Enolase.